A 227-amino-acid chain; its full sequence is 2-C-methyl-D-erythritol 4-phosphate cytidylyltransferase (227 aa).

This sequence belongs to the IspD/TarI cytidylyltransferase family. IspD subfamily.

It carries out the reaction 2-C-methyl-D-erythritol 4-phosphate + CTP + H(+) = 4-CDP-2-C-methyl-D-erythritol + diphosphate. It participates in isoprenoid biosynthesis; isopentenyl diphosphate biosynthesis via DXP pathway; isopentenyl diphosphate from 1-deoxy-D-xylulose 5-phosphate: step 2/6. Catalyzes the formation of 4-diphosphocytidyl-2-C-methyl-D-erythritol from CTP and 2-C-methyl-D-erythritol 4-phosphate (MEP). The polypeptide is 2-C-methyl-D-erythritol 4-phosphate cytidylyltransferase (Lachnospira eligens (strain ATCC 27750 / DSM 3376 / VPI C15-48 / C15-B4) (Eubacterium eligens)).